The sequence spans 437 residues: Protein translocase subunit SecY (437 aa).

10 consecutive transmembrane segments (helical) span residues 23–43 (IVFL…PIPG), 77–97 (IFAL…LLTL), 125–145 (LILA…IAGI), 154–174 (FYFY…LMWL), 183–203 (IGNG…PSAI), 217–237 (ILLF…VVFM), 271–291 (MAGV…ATII), 315–335 (YLIL…GLVF), 367–387 (IMLR…LIPE), and 395–415 (VPFY…IDFI).

This sequence belongs to the SecY/SEC61-alpha family. Component of the Sec protein translocase complex. Heterotrimer consisting of SecY, SecE and SecG subunits. The heterotrimers can form oligomers, although 1 heterotrimer is thought to be able to translocate proteins. Interacts with the ribosome. Interacts with SecDF, and other proteins may be involved. Interacts with SecA.

The protein localises to the cell membrane. Its function is as follows. The central subunit of the protein translocation channel SecYEG. Consists of two halves formed by TMs 1-5 and 6-10. These two domains form a lateral gate at the front which open onto the bilayer between TMs 2 and 7, and are clamped together by SecE at the back. The channel is closed by both a pore ring composed of hydrophobic SecY resides and a short helix (helix 2A) on the extracellular side of the membrane which forms a plug. The plug probably moves laterally to allow the channel to open. The ring and the pore may move independently. In Buchnera aphidicola subsp. Acyrthosiphon pisum (strain APS) (Acyrthosiphon pisum symbiotic bacterium), this protein is Protein translocase subunit SecY.